Consider the following 150-residue polypeptide: Small ribosomal subunit protein eS19 (150 aa).

Belongs to the eukaryotic ribosomal protein eS19 family. Part of the 30S ribosomal subunit.

May be involved in maturation of the 30S ribosomal subunit. The protein is Small ribosomal subunit protein eS19 of Thermoplasma acidophilum (strain ATCC 25905 / DSM 1728 / JCM 9062 / NBRC 15155 / AMRC-C165).